Here is a 741-residue protein sequence, read N- to C-terminus: 1,4-alpha-glucan branching enzyme GlgB (741 aa).

The Nucleophile role is filled by Asp-420. The active-site Proton donor is the Glu-473.

Belongs to the glycosyl hydrolase 13 family. GlgB subfamily. In terms of assembly, monomer.

It carries out the reaction Transfers a segment of a (1-&gt;4)-alpha-D-glucan chain to a primary hydroxy group in a similar glucan chain.. Its pathway is glycan biosynthesis; glycogen biosynthesis. Catalyzes the formation of the alpha-1,6-glucosidic linkages in glycogen by scission of a 1,4-alpha-linked oligosaccharide from growing alpha-1,4-glucan chains and the subsequent attachment of the oligosaccharide to the alpha-1,6 position. In Pseudomonas syringae pv. syringae (strain B728a), this protein is 1,4-alpha-glucan branching enzyme GlgB.